The primary structure comprises 204 residues: MGAYRYMQELYRKKQSDVMRYLLRIRVWQYRQLTKLHRSPRPTRPDKARRLGYRAKQGFVIYRIRVRRGGRKRPVPKGCTYGKPKSHGVNQLKPYRGLQSIAEERVGRRLGGLRVLNSYWIAQDASYKYFEVILIDTHHSAIRRDPKINWICKHVHKHRELRGLTSAGKSSRGIGKGYRYSQTIGGSRRAAWKRKNREHMHRKR.

Residues 185–204 (GGSRRAAWKRKNREHMHRKR) are disordered. The span at 190 to 204 (AAWKRKNREHMHRKR) shows a compositional bias: basic residues.

Belongs to the eukaryotic ribosomal protein eL15 family.

The protein is Large ribosomal subunit protein eL15 (RpL15) of Drosophila melanogaster (Fruit fly).